A 620-amino-acid chain; its full sequence is Protein translocase subunit SecD (620 aa).

6 consecutive transmembrane segments (helical) span residues 10–30 (YLLILAVLAVGFIYSAPNLYP), 464–484 (LWGMLFVSLFIIVIYRFFGVI), 488–507 (ALAFNMVMLVALMSILGATL), 511–533 (GIAGIVLTMGMAVDANVLIFSRI), 555–575 (FTAILDANLTSLLVGGILYAM), and 582–602 (GFAVTMSLGIITSMFTAIMVT).

This sequence belongs to the SecD/SecF family. SecD subfamily. Forms a complex with SecF. Part of the essential Sec protein translocation apparatus which comprises SecA, SecYEG and auxiliary proteins SecDF-YajC and YidC.

The protein localises to the cell inner membrane. Part of the Sec protein translocase complex. Interacts with the SecYEG preprotein conducting channel. SecDF uses the proton motive force (PMF) to complete protein translocation after the ATP-dependent function of SecA. This Pseudomonas aeruginosa (strain ATCC 15692 / DSM 22644 / CIP 104116 / JCM 14847 / LMG 12228 / 1C / PRS 101 / PAO1) protein is Protein translocase subunit SecD.